Here is a 200-residue protein sequence, read N- to C-terminus: LexA repressor (200 aa).

Residues 28–48 (RAEIAEILGFKSANAAEEHLK) constitute a DNA-binding region (H-T-H motif). Catalysis depends on for autocatalytic cleavage activity residues serine 118 and lysine 155.

It belongs to the peptidase S24 family. In terms of assembly, homodimer.

It carries out the reaction Hydrolysis of Ala-|-Gly bond in repressor LexA.. Its function is as follows. Represses a number of genes involved in the response to DNA damage (SOS response), including recA and lexA. In the presence of single-stranded DNA, RecA interacts with LexA causing an autocatalytic cleavage which disrupts the DNA-binding part of LexA, leading to derepression of the SOS regulon and eventually DNA repair. In Teredinibacter turnerae (strain ATCC 39867 / T7901), this protein is LexA repressor.